We begin with the raw amino-acid sequence, 197 residues long: Guanylate kinase (197 aa).

Residues 1 to 30 are disordered; the sequence is MAATPRGTSPVPPDARPRLTVLSGPSGVGK. The Guanylate kinase-like domain occupies 17–197; that stretch reads PRLTVLSGPS…RELLALTNVV (181 aa). Position 24–31 (24–31) interacts with ATP; sequence GPSGVGKS.

Belongs to the guanylate kinase family.

It localises to the cytoplasm. The enzyme catalyses GMP + ATP = GDP + ADP. Functionally, essential for recycling GMP and indirectly, cGMP. The protein is Guanylate kinase (gmk) of Streptomyces coelicolor (strain ATCC BAA-471 / A3(2) / M145).